The chain runs to 337 residues: MAKIFYDNDADLSLIQSKKVAIVGYGSQGHAHALNLRDSGVTVIVALPEGSKSRPKAQAAGLQVATVSEAAKAADVIMILAPDTSQARIYNEQIAPHLGPGKTLMFAHGFNIRFNTITPPPSVDVSMIAPKGPGHRVRETFEAGGGVPALLAVHQDASGKAEAQALAYAKGIGATRAGVLLTTFAEETETDLFGEQAVLCGGASELVKAGFETLVNAGYQPEIAYFECLHELKLIVDLMYRGGLNYMRYSISDTAEHGDYVSGPRVITDKTREEMKRILAEIQSGEFARKWIAENEAGRPKFEATRAKEREQRLEIVGANLRKMMPFIDPVTIKPGD.

The region spanning 2-182 is the KARI N-terminal Rossmann domain; that stretch reads AKIFYDNDAD…GATRAGVLLT (181 aa). NADP(+)-binding positions include 25 to 28, S51, S53, and 83 to 86; these read YGSQ and DTSQ. Residue H108 is part of the active site. G134 contributes to the NADP(+) binding site. Residues 183 to 328 enclose the KARI C-terminal knotted domain; it reads TFAEETETDL…ANLRKMMPFI (146 aa). Mg(2+) is bound by residues D191, E195, E227, and E231. S252 provides a ligand contact to substrate.

This sequence belongs to the ketol-acid reductoisomerase family. Mg(2+) is required as a cofactor.

The catalysed reaction is (2R)-2,3-dihydroxy-3-methylbutanoate + NADP(+) = (2S)-2-acetolactate + NADPH + H(+). It catalyses the reaction (2R,3R)-2,3-dihydroxy-3-methylpentanoate + NADP(+) = (S)-2-ethyl-2-hydroxy-3-oxobutanoate + NADPH + H(+). It functions in the pathway amino-acid biosynthesis; L-isoleucine biosynthesis; L-isoleucine from 2-oxobutanoate: step 2/4. It participates in amino-acid biosynthesis; L-valine biosynthesis; L-valine from pyruvate: step 2/4. Functionally, involved in the biosynthesis of branched-chain amino acids (BCAA). Catalyzes an alkyl-migration followed by a ketol-acid reduction of (S)-2-acetolactate (S2AL) to yield (R)-2,3-dihydroxy-isovalerate. In the isomerase reaction, S2AL is rearranged via a Mg-dependent methyl migration to produce 3-hydroxy-3-methyl-2-ketobutyrate (HMKB). In the reductase reaction, this 2-ketoacid undergoes a metal-dependent reduction by NADPH to yield (R)-2,3-dihydroxy-isovalerate. The chain is Ketol-acid reductoisomerase (NADP(+)) from Sorangium cellulosum (strain So ce56) (Polyangium cellulosum (strain So ce56)).